Reading from the N-terminus, the 240-residue chain is uncharacterized protein (240 aa).

Positions 1–30 are cleaved as a signal peptide; sequence MNKSGMSLIITMLLLIGTAIVIGAAYYAWS.

This is an uncharacterized protein from Methanocaldococcus jannaschii (strain ATCC 43067 / DSM 2661 / JAL-1 / JCM 10045 / NBRC 100440) (Methanococcus jannaschii).